The primary structure comprises 130 residues: Large ribosomal subunit protein bL19 (130 aa).

It belongs to the bacterial ribosomal protein bL19 family.

Its function is as follows. This protein is located at the 30S-50S ribosomal subunit interface and may play a role in the structure and function of the aminoacyl-tRNA binding site. The sequence is that of Large ribosomal subunit protein bL19 from Gluconobacter oxydans (strain 621H) (Gluconobacter suboxydans).